The following is a 67-amino-acid chain: Small ribosomal subunit protein bS21 (67 aa).

This sequence belongs to the bacterial ribosomal protein bS21 family.

This is Small ribosomal subunit protein bS21 from Oleidesulfovibrio alaskensis (strain ATCC BAA-1058 / DSM 17464 / G20) (Desulfovibrio alaskensis).